The following is a 1025-amino-acid chain: Multidrug resistance protein MdtC (1025 aa).

The next 12 helical transmembrane spans lie at 3–23, 333–353, 360–380, 387–407, 431–451, 463–483, 528–548, 853–873, 875–895, 897–917, 953–973, and 984–1004; these read FFAL…AITL, EVEQ…FLFL, IIPA…MYLC, LSLM…IVVL, VGFT…PLLL, FAVT…TLTP, LVGV…ISIP, VILI…LYES, VHPL…LLAL, LFNA…IGIV, PIMM…LSGG, and ITIV…TPVV.

The protein belongs to the resistance-nodulation-cell division (RND) (TC 2.A.6) family. MdtC subfamily. As to quaternary structure, part of a tripartite efflux system composed of MdtA, MdtB and MdtC. MdtC forms a heteromultimer with MdtB.

The protein resides in the cell inner membrane. Its function is as follows. The MdtABC tripartite complex confers resistance against novobiocin and deoxycholate. The protein is Multidrug resistance protein MdtC of Escherichia coli O1:K1 / APEC.